Reading from the N-terminus, the 291-residue chain is Nucleotide-binding protein MSMEG_3079/MSMEI_3001 (291 aa).

Glycine 14–glycine 21 is an ATP binding site. Aspartate 65–serine 68 contributes to the GTP binding site.

The protein belongs to the RapZ-like family.

Displays ATPase and GTPase activities. The sequence is that of Nucleotide-binding protein MSMEG_3079/MSMEI_3001 from Mycolicibacterium smegmatis (strain ATCC 700084 / mc(2)155) (Mycobacterium smegmatis).